The chain runs to 1469 residues: uncharacterized protein (1469 aa).

Over residues 146-180 (GDHITPKEEEEKEKEKEKEKEKEKEKEKEKEKDSE) the composition is skewed to basic and acidic residues. Disordered regions lie at residues 146 to 186 (GDHI…LQEQ), 231 to 255 (IQNN…DNNN), 306 to 344 (TTTT…GGDS), 430 to 455 (LNFN…PYHY), 520 to 560 (PVKN…NNNS), 654 to 706 (TTTT…PLVR), 719 to 755 (RTQT…VKNQ), 881 to 958 (YNNI…NIIN), and 1329 to 1369 (NCSS…NSSN). Low complexity-rich tracts occupy residues 232–241 (QNNQNNQNNN), 306–327 (TTTT…ISNT), 430–449 (LNFN…NNNN), 523–559 (NNNN…INNN), and 654–693 (TTTT…TTTP). Positions 719-731 (RTQTQLQTKIQPK) are enriched in polar residues. The span at 732–749 (SPQPQPTAAPEPQKPPTP) shows a compositional bias: pro residues. Low complexity-rich tracts occupy residues 1329–1347 (NCSS…SGSE) and 1354–1369 (RSNT…NSSN).

This is an uncharacterized protein from Dictyostelium discoideum (Social amoeba).